The chain runs to 64 residues: Large ribosomal subunit protein bL35 (64 aa).

It belongs to the bacterial ribosomal protein bL35 family.

The sequence is that of Large ribosomal subunit protein bL35 from Pelodictyon phaeoclathratiforme (strain DSM 5477 / BU-1).